A 369-amino-acid chain; its full sequence is Dihydroorotate dehydrogenase (quinone) (369 aa).

Residues Ala66 to Lys70 and Thr90 contribute to the FMN site. Lys70 provides a ligand contact to substrate. Substrate is bound at residue Asn115–Phe119. Asn143 and Asn176 together coordinate FMN. Residue Asn176 participates in substrate binding. Ser179 (nucleophile) is an active-site residue. Asn181 lines the substrate pocket. The FMN site is built by Lys217 and Thr245. Position 246 to 247 (Asn246 to Thr247) interacts with substrate. FMN-binding positions include Gly271, Gly300, and Tyr321 to Thr322.

Belongs to the dihydroorotate dehydrogenase family. Type 2 subfamily. Monomer. The cofactor is FMN.

The protein resides in the cell membrane. The catalysed reaction is (S)-dihydroorotate + a quinone = orotate + a quinol. The protein operates within pyrimidine metabolism; UMP biosynthesis via de novo pathway; orotate from (S)-dihydroorotate (quinone route): step 1/1. Its function is as follows. Catalyzes the conversion of dihydroorotate to orotate with quinone as electron acceptor. The chain is Dihydroorotate dehydrogenase (quinone) from Nocardia farcinica (strain IFM 10152).